The chain runs to 673 residues: DNA ligase (673 aa).

Residues 34 to 38 (DAEYD), 83 to 84 (SL), and Glu116 each bind NAD(+). The active-site N6-AMP-lysine intermediate is Lys118. Residues Arg139, Glu176, Lys293, and Lys317 each contribute to the NAD(+) site. 4 residues coordinate Zn(2+): Cys411, Cys414, Cys429, and Cys435. One can recognise a BRCT domain in the interval 595-673 (NQQNPFFGKT…EDEFLKWVNS (79 aa)).

It belongs to the NAD-dependent DNA ligase family. LigA subfamily. The cofactor is Mg(2+). Mn(2+) is required as a cofactor.

It carries out the reaction NAD(+) + (deoxyribonucleotide)n-3'-hydroxyl + 5'-phospho-(deoxyribonucleotide)m = (deoxyribonucleotide)n+m + AMP + beta-nicotinamide D-nucleotide.. DNA ligase that catalyzes the formation of phosphodiester linkages between 5'-phosphoryl and 3'-hydroxyl groups in double-stranded DNA using NAD as a coenzyme and as the energy source for the reaction. It is essential for DNA replication and repair of damaged DNA. The protein is DNA ligase of Legionella pneumophila subsp. pneumophila (strain Philadelphia 1 / ATCC 33152 / DSM 7513).